Here is a 1070-residue protein sequence, read N- to C-terminus: DNA-directed RNA polymerase subunit beta (1070 aa).

Belongs to the RNA polymerase beta chain family. As to quaternary structure, in plastids the minimal PEP RNA polymerase catalytic core is composed of four subunits: alpha, beta, beta', and beta''. When a (nuclear-encoded) sigma factor is associated with the core the holoenzyme is formed, which can initiate transcription.

The protein localises to the plastid. The protein resides in the chloroplast. The enzyme catalyses RNA(n) + a ribonucleoside 5'-triphosphate = RNA(n+1) + diphosphate. DNA-dependent RNA polymerase catalyzes the transcription of DNA into RNA using the four ribonucleoside triphosphates as substrates. In Silene latifolia (White campion), this protein is DNA-directed RNA polymerase subunit beta.